The following is a 440-amino-acid chain: Ribosomal protein uS12 methylthiotransferase RimO (440 aa).

Residues M1 to S117 enclose the MTTase N-terminal domain. Positions 10, 46, 80, 155, 159, and 162 each coordinate [4Fe-4S] cluster. The Radical SAM core domain maps to C141 to R371. Residues A374–Q440 enclose the TRAM domain.

Belongs to the methylthiotransferase family. RimO subfamily. The cofactor is [4Fe-4S] cluster.

The protein localises to the cytoplasm. The enzyme catalyses L-aspartate(89)-[ribosomal protein uS12]-hydrogen + (sulfur carrier)-SH + AH2 + 2 S-adenosyl-L-methionine = 3-methylsulfanyl-L-aspartate(89)-[ribosomal protein uS12]-hydrogen + (sulfur carrier)-H + 5'-deoxyadenosine + L-methionine + A + S-adenosyl-L-homocysteine + 2 H(+). Catalyzes the methylthiolation of an aspartic acid residue of ribosomal protein uS12. The polypeptide is Ribosomal protein uS12 methylthiotransferase RimO (Desulfosudis oleivorans (strain DSM 6200 / JCM 39069 / Hxd3) (Desulfococcus oleovorans)).